The primary structure comprises 309 residues: Ferrochelatase (309 aa).

Positions 185 and 264 each coordinate Fe cation.

It belongs to the ferrochelatase family.

Its subcellular location is the cytoplasm. The catalysed reaction is heme b + 2 H(+) = protoporphyrin IX + Fe(2+). Its pathway is porphyrin-containing compound metabolism; protoheme biosynthesis; protoheme from protoporphyrin-IX: step 1/1. Catalyzes the ferrous insertion into protoporphyrin IX. The protein is Ferrochelatase of Aquifex aeolicus (strain VF5).